Here is a 438-residue protein sequence, read N- to C-terminus: MKETPLSNCERRFLLRAIEEKKRLDGRQTYDYRNIRISFGTDYGCCIVELGKTRVLGQVSCELVSPKLNRATEGILFFNLELSQMAAPAFEPGRQSDLLVKLNRLLERCLRNSKCIDTESLCVVAGEKVWQIRVDLHLLNHDGNIIDAASIAAIVALCHFRRPDVSVQGEEVTLYTPEERDPVPLSIHHMPICVSFAFFQQGTYLLVDPNEREERVMDGLLVIAMNKHREICTIQSSGGIMLLKDQVFRCSKIAGVKVAEITELIQKALENDQRVRKEGGKFGFAESIANQRITAFKMETAPIDTSNIEERAEEIIAEAEPPPEVVSQPVLWTPGTAQIGDGIENSWGDLEDSEKEEEEEEGGIDEAVILDDTKMDTGEVSDIGSQGAPIVLSDSEEEEMIILEPEKNPKKIRAQTSANQKAPSKGQGKRKKKKRTAN.

Ser-65 is subject to Phosphoserine. Lys-297 is subject to N6-acetyllysine; alternate. Lys-297 is covalently cross-linked (Glycyl lysine isopeptide (Lys-Gly) (interchain with G-Cter in SUMO1); alternate). Lys-297 is covalently cross-linked (Glycyl lysine isopeptide (Lys-Gly) (interchain with G-Cter in SUMO2); alternate). Ser-306 and Ser-346 each carry phosphoserine. 2 disordered regions span residues 337–365 (AQIG…GGID) and 377–438 (TGEV…RTAN). The segment covering 349–364 (DLEDSEKEEEEEEGGI) has biased composition (acidic residues). Ser-393 and Ser-395 each carry phosphoserine. The span at 427–438 (QGKRKKKKRTAN) shows a compositional bias: basic residues.

The protein belongs to the RNase PH family. Component of the RNA exosome core complex (Exo-9), composed of EXOSC1, EXOSC2, EXOSC3, EXOSC4, EXOSC5, EXOSC6, EXOSC7, EXOSC8 and EXOSC9; within the complex interacts with EXOSC3, EXOSC4, EXOSC5 and DIS3. The catalytically inactive RNA exosome core complex (Exo-9) associates with the catalytic subunit EXOSC10/RRP6. Exo-9 may associate with DIS3 to form the nucleolar exosome complex, or DIS3L to form the cytoplasmic exosome complex. Exo-9 is formed by a hexameric base ring consisting of the heterodimers EXOSC4-EXOSC9, EXOSC5-EXOSC8 and EXOSC6-EXOSC7, and a cap ring consisting of EXOSC1, EXOSC2 and EXOSC3. The RNA exosome complex associates with cofactors C1D/RRP47, MPHOSPH6/MPP6 and MTREX/MTR4. Interacts (via C-terminus region) with SETX (via N-terminus domain); the interaction enhances SETX sumoylation. Interacts with DIS3; the interaction is direct.

The protein localises to the cytoplasm. The protein resides in the nucleus. It localises to the nucleolus. It is found in the nucleoplasm. Non-catalytic component of the RNA exosome complex which has 3'-&gt;5' exoribonuclease activity and participates in a multitude of cellular RNA processing and degradation events. In the nucleus, the RNA exosome complex is involved in proper maturation of stable RNA species such as rRNA, snRNA and snoRNA, in the elimination of RNA processing by-products and non-coding 'pervasive' transcripts, such as antisense RNA species and promoter-upstream transcripts (PROMPTs), and of mRNAs with processing defects, thereby limiting or excluding their export to the cytoplasm. The RNA exosome may be involved in Ig class switch recombination (CSR) and/or Ig variable region somatic hypermutation (SHM) by targeting AICDA deamination activity to transcribed dsDNA substrates. In the cytoplasm, the RNA exosome complex is involved in general mRNA turnover and specifically degrades inherently unstable mRNAs containing AU-rich elements (AREs) within their 3' untranslated regions, and in RNA surveillance pathways, preventing translation of aberrant mRNAs. It seems to be involved in degradation of histone mRNA. The catalytic inactive RNA exosome core complex of 9 subunits (Exo-9) is proposed to play a pivotal role in the binding and presentation of RNA for ribonucleolysis, and to serve as a scaffold for the association with catalytic subunits and accessory proteins or complexes. EXOSC9 binds to ARE-containing RNAs. This chain is Exosome complex component RRP45 (Exosc9), found in Mus musculus (Mouse).